The primary structure comprises 85 residues: Photosystem I reaction center subunit PsaK (85 aa).

The next 2 helical transmembrane spans lie at 13-33 and 59-79; these read VSWT…AIAI and GAML…ILGL.

Belongs to the PsaG/PsaK family.

It is found in the cellular thylakoid membrane. The sequence is that of Photosystem I reaction center subunit PsaK from Synechococcus sp. (strain WH7803).